The sequence spans 84 residues: Mitochondrial import inner membrane translocase subunit Tim9 (84 aa).

A Twin CX3C motif motif is present at residues 28–52 (CFMDCVKDFTTREVKPEETTCSESC). 2 cysteine pairs are disulfide-bonded: Cys-28–Cys-52 and Cys-32–Cys-48.

This sequence belongs to the small Tim family. Heterohexamer; composed of 3 copies of TIMM9 and 3 copies of TIMM10/TIM10A, named soluble 70 kDa complex. The complex forms a 6-bladed alpha-propeller structure and associates with the TIMM22 component of the TIM22 complex. Interacts with multi-pass transmembrane proteins in transit.

Its subcellular location is the mitochondrion inner membrane. Its function is as follows. Mitochondrial intermembrane chaperone that participates in the import and insertion of multi-pass transmembrane proteins into the mitochondrial inner membrane. May also be required for the transfer of beta-barrel precursors from the TOM complex to the sorting and assembly machinery (SAM complex) of the outer membrane. Acts as a chaperone-like protein that protects the hydrophobic precursors from aggregation and guide them through the mitochondrial intermembrane space. The chain is Mitochondrial import inner membrane translocase subunit Tim9 (timm9) from Danio rerio (Zebrafish).